Reading from the N-terminus, the 217-residue chain is Small ribosomal subunit protein uS3 (217 aa).

In terms of domain architecture, KH type-2 spans 38–106 (IRKFVQKELA…QVHINIIEIK (69 aa)).

Belongs to the universal ribosomal protein uS3 family. As to quaternary structure, part of the 30S ribosomal subunit. Forms a tight complex with proteins S10 and S14.

Functionally, binds the lower part of the 30S subunit head. Binds mRNA in the 70S ribosome, positioning it for translation. The sequence is that of Small ribosomal subunit protein uS3 from Streptococcus gordonii (strain Challis / ATCC 35105 / BCRC 15272 / CH1 / DL1 / V288).